A 375-amino-acid chain; its full sequence is Erythronate-4-phosphate dehydrogenase (375 aa).

The substrate site is built by Ser-45 and Thr-66. NAD(+)-binding positions include Asp-146, Thr-175, 206 to 208 (ASR), and Asp-232. Residue Arg-208 is part of the active site. The active site involves Glu-237. The Proton donor role is filled by His-254. Gly-257 serves as a coordination point for NAD(+). Residue Tyr-258 participates in substrate binding.

The protein belongs to the D-isomer specific 2-hydroxyacid dehydrogenase family. PdxB subfamily. As to quaternary structure, homodimer.

Its subcellular location is the cytoplasm. The enzyme catalyses 4-phospho-D-erythronate + NAD(+) = (R)-3-hydroxy-2-oxo-4-phosphooxybutanoate + NADH + H(+). Its pathway is cofactor biosynthesis; pyridoxine 5'-phosphate biosynthesis; pyridoxine 5'-phosphate from D-erythrose 4-phosphate: step 2/5. Its function is as follows. Catalyzes the oxidation of erythronate-4-phosphate to 3-hydroxy-2-oxo-4-phosphonooxybutanoate. This Photorhabdus laumondii subsp. laumondii (strain DSM 15139 / CIP 105565 / TT01) (Photorhabdus luminescens subsp. laumondii) protein is Erythronate-4-phosphate dehydrogenase.